The chain runs to 159 residues: 2-C-methyl-D-erythritol 2,4-cyclodiphosphate synthase (159 aa).

The a divalent metal cation site is built by Asp10 and His12. Residues 10–12 and 36–37 each bind 4-CDP-2-C-methyl-D-erythritol 2-phosphate; these read DVH and HS. His44 is an a divalent metal cation binding site. 4-CDP-2-C-methyl-D-erythritol 2-phosphate is bound by residues 58-60, 63-67, 134-137, and Arg144; these read DIG, FANTD, and TTNE.

The protein belongs to the IspF family. In terms of assembly, homotrimer. A divalent metal cation is required as a cofactor.

The enzyme catalyses 4-CDP-2-C-methyl-D-erythritol 2-phosphate = 2-C-methyl-D-erythritol 2,4-cyclic diphosphate + CMP. It functions in the pathway isoprenoid biosynthesis; isopentenyl diphosphate biosynthesis via DXP pathway; isopentenyl diphosphate from 1-deoxy-D-xylulose 5-phosphate: step 4/6. Functionally, involved in the biosynthesis of isopentenyl diphosphate (IPP) and dimethylallyl diphosphate (DMAPP), two major building blocks of isoprenoid compounds. Catalyzes the conversion of 4-diphosphocytidyl-2-C-methyl-D-erythritol 2-phosphate (CDP-ME2P) to 2-C-methyl-D-erythritol 2,4-cyclodiphosphate (ME-CPP) with a corresponding release of cytidine 5-monophosphate (CMP). The sequence is that of 2-C-methyl-D-erythritol 2,4-cyclodiphosphate synthase from Cytophaga hutchinsonii (strain ATCC 33406 / DSM 1761 / CIP 103989 / NBRC 15051 / NCIMB 9469 / D465).